The primary structure comprises 437 residues: Adenylosuccinate synthetase, organellar chromatophore (437 aa).

GTP-binding positions include 12–18 and 40–42; these read GDEGKGK and GHT. The active-site Proton acceptor is the aspartate 13. Residues aspartate 13 and glycine 40 each contribute to the Mg(2+) site. Residues 13–16, 38–41, threonine 128, arginine 142, glutamine 223, threonine 238, and arginine 302 each bind IMP; these read DEGK and NAGH. The active-site Proton donor is the histidine 41. Residue 298 to 304 coordinates substrate; it reads TTTGRRR. GTP is bound by residues arginine 304 and 330–332; that span reads KLD.

This sequence belongs to the adenylosuccinate synthetase family. As to quaternary structure, homodimer. It depends on Mg(2+) as a cofactor.

Its subcellular location is the plastid. The protein resides in the organellar chromatophore. It catalyses the reaction IMP + L-aspartate + GTP = N(6)-(1,2-dicarboxyethyl)-AMP + GDP + phosphate + 2 H(+). It participates in purine metabolism; AMP biosynthesis via de novo pathway; AMP from IMP: step 1/2. In terms of biological role, plays an important role in the de novo pathway and in the salvage pathway of purine nucleotide biosynthesis. Catalyzes the first committed step in the biosynthesis of AMP from IMP. This Paulinella chromatophora protein is Adenylosuccinate synthetase, organellar chromatophore.